The following is a 380-amino-acid chain: 1-deoxy-D-xylulose 5-phosphate reductoisomerase 2 (380 aa).

8 residues coordinate NADPH: Ser10, Gly11, Ser12, Ile13, Gly36, Lys37, Asn38, and Asn120. Lys121 is a binding site for 1-deoxy-D-xylulose 5-phosphate. Position 122 (Glu122) interacts with NADPH. A Mn(2+)-binding site is contributed by Asp146. 1-deoxy-D-xylulose 5-phosphate is bound by residues Ser147, Glu148, Ser172, and His195. Glu148 contributes to the Mn(2+) binding site. Gly201 contributes to the NADPH binding site. The 1-deoxy-D-xylulose 5-phosphate site is built by Ser208, Asn213, Lys214, and Glu217. Glu217 contacts Mn(2+).

It belongs to the DXR family. It depends on Mg(2+) as a cofactor. Requires Mn(2+) as cofactor.

It catalyses the reaction 2-C-methyl-D-erythritol 4-phosphate + NADP(+) = 1-deoxy-D-xylulose 5-phosphate + NADPH + H(+). The protein operates within isoprenoid biosynthesis; isopentenyl diphosphate biosynthesis via DXP pathway; isopentenyl diphosphate from 1-deoxy-D-xylulose 5-phosphate: step 1/6. Functionally, catalyzes the NADPH-dependent rearrangement and reduction of 1-deoxy-D-xylulose-5-phosphate (DXP) to 2-C-methyl-D-erythritol 4-phosphate (MEP). The polypeptide is 1-deoxy-D-xylulose 5-phosphate reductoisomerase 2 (Bacillus thuringiensis subsp. konkukian (strain 97-27)).